We begin with the raw amino-acid sequence, 308 residues long: Methionyl-tRNA formyltransferase (308 aa).

107–110 (SLLP) lines the (6S)-5,6,7,8-tetrahydrofolate pocket.

Belongs to the Fmt family.

It catalyses the reaction L-methionyl-tRNA(fMet) + (6R)-10-formyltetrahydrofolate = N-formyl-L-methionyl-tRNA(fMet) + (6S)-5,6,7,8-tetrahydrofolate + H(+). In terms of biological role, attaches a formyl group to the free amino group of methionyl-tRNA(fMet). The formyl group appears to play a dual role in the initiator identity of N-formylmethionyl-tRNA by promoting its recognition by IF2 and preventing the misappropriation of this tRNA by the elongation apparatus. The polypeptide is Methionyl-tRNA formyltransferase (Carboxydothermus hydrogenoformans (strain ATCC BAA-161 / DSM 6008 / Z-2901)).